Reading from the N-terminus, the 107-residue chain is TVYTVGDSAGWKVPFFGDVDYDWKWASNKTFHIGDVLVFKYDRRFHNVDKVTQKNYQSCNDTTPIASYNTGBBRINLKTVGQKYYICGVPKHCDLGQKVHINVTVRS.

Residues 1–105 (TVYTVGDSAG…GQKVHINVTV (105 aa)) enclose the Phytocyanin domain. N-linked (GlcNAc...) asparagine glycosylation occurs at Asn28. Residue His46 participates in Cu cation binding. A disulfide bond links Cys59 and Cys93. N-linked (GlcNAc...) asparagine glycosylation occurs at Asn60. Cu cation is bound by residues Cys87, His92, and Gln97. N-linked (GlcNAc...) asparagine glycosylation is present at Asn102.

This is Stellacyanin from Toxicodendron vernicifluum (Japanese lacquer tree).